The following is a 73-amino-acid chain: UPF0150 protein ssl0259 (73 aa).

Belongs to the UPF0150 family.

The chain is UPF0150 protein ssl0259 from Synechocystis sp. (strain ATCC 27184 / PCC 6803 / Kazusa).